Here is a 138-residue protein sequence, read N- to C-terminus: Large ribosomal subunit protein uL16 (138 aa).

Belongs to the universal ribosomal protein uL16 family. Part of the 50S ribosomal subunit.

In terms of biological role, binds 23S rRNA and is also seen to make contacts with the A and possibly P site tRNAs. In Corynebacterium kroppenstedtii (strain DSM 44385 / JCM 11950 / CIP 105744 / CCUG 35717), this protein is Large ribosomal subunit protein uL16.